A 311-amino-acid chain; its full sequence is tRNA-cytidine(32) 2-sulfurtransferase (311 aa).

Residues 45–50 carry the PP-loop motif motif; the sequence is SGGKDS. Residues Cys120, Cys123, and Cys211 each contribute to the [4Fe-4S] cluster site.

This sequence belongs to the TtcA family. In terms of assembly, homodimer. Mg(2+) is required as a cofactor. [4Fe-4S] cluster serves as cofactor.

Its subcellular location is the cytoplasm. It catalyses the reaction cytidine(32) in tRNA + S-sulfanyl-L-cysteinyl-[cysteine desulfurase] + AH2 + ATP = 2-thiocytidine(32) in tRNA + L-cysteinyl-[cysteine desulfurase] + A + AMP + diphosphate + H(+). It functions in the pathway tRNA modification. Functionally, catalyzes the ATP-dependent 2-thiolation of cytidine in position 32 of tRNA, to form 2-thiocytidine (s(2)C32). The sulfur atoms are provided by the cysteine/cysteine desulfurase (IscS) system. The protein is tRNA-cytidine(32) 2-sulfurtransferase of Shewanella halifaxensis (strain HAW-EB4).